Reading from the N-terminus, the 264-residue chain is Glutamate racemase (264 aa).

Substrate contacts are provided by residues 10 to 11 (DS) and 42 to 43 (YG). Catalysis depends on C73, which acts as the Proton donor/acceptor. 74 to 75 (NT) provides a ligand contact to substrate. C183 (proton donor/acceptor) is an active-site residue. Substrate is bound at residue 184–185 (TH).

The protein belongs to the aspartate/glutamate racemases family.

The catalysed reaction is L-glutamate = D-glutamate. It participates in cell wall biogenesis; peptidoglycan biosynthesis. Functionally, provides the (R)-glutamate required for cell wall biosynthesis. This is Glutamate racemase from Streptococcus mutans serotype c (strain ATCC 700610 / UA159).